A 220-amino-acid polypeptide reads, in one-letter code: Cytidylate kinase (220 aa).

10 to 18 lines the ATP pocket; that stretch reads GPASSGKST.

This sequence belongs to the cytidylate kinase family. Type 1 subfamily.

It is found in the cytoplasm. The catalysed reaction is CMP + ATP = CDP + ADP. It carries out the reaction dCMP + ATP = dCDP + ADP. The sequence is that of Cytidylate kinase from Lactococcus lactis subsp. lactis (strain IL1403) (Streptococcus lactis).